A 350-amino-acid polypeptide reads, in one-letter code: Biotin synthase (350 aa).

The Radical SAM core domain occupies 38-256; it reads NYVQVSTLLS…IAVARIMMPT (219 aa). Cysteine 53, cysteine 57, and cysteine 60 together coordinate [4Fe-4S] cluster. 4 residues coordinate [2Fe-2S] cluster: cysteine 97, cysteine 128, cysteine 188, and arginine 260.

It belongs to the radical SAM superfamily. Biotin synthase family. As to quaternary structure, homodimer. It depends on [4Fe-4S] cluster as a cofactor. [2Fe-2S] cluster serves as cofactor.

The catalysed reaction is (4R,5S)-dethiobiotin + (sulfur carrier)-SH + 2 reduced [2Fe-2S]-[ferredoxin] + 2 S-adenosyl-L-methionine = (sulfur carrier)-H + biotin + 2 5'-deoxyadenosine + 2 L-methionine + 2 oxidized [2Fe-2S]-[ferredoxin]. It functions in the pathway cofactor biosynthesis; biotin biosynthesis; biotin from 7,8-diaminononanoate: step 2/2. In terms of biological role, catalyzes the conversion of dethiobiotin (DTB) to biotin by the insertion of a sulfur atom into dethiobiotin via a radical-based mechanism. The sequence is that of Biotin synthase from Vibrio vulnificus (strain CMCP6).